The following is a 278-amino-acid chain: 4-deoxy-L-threo-5-hexosulose-uronate ketol-isomerase (278 aa).

4 residues coordinate Zn(2+): histidine 196, histidine 198, glutamate 203, and histidine 245.

The protein belongs to the KduI family. The cofactor is Zn(2+).

It catalyses the reaction 5-dehydro-4-deoxy-D-glucuronate = 3-deoxy-D-glycero-2,5-hexodiulosonate. Its pathway is glycan metabolism; pectin degradation; 2-dehydro-3-deoxy-D-gluconate from pectin: step 4/5. In terms of biological role, catalyzes the isomerization of 5-dehydro-4-deoxy-D-glucuronate to 3-deoxy-D-glycero-2,5-hexodiulosonate. The chain is 4-deoxy-L-threo-5-hexosulose-uronate ketol-isomerase from Salmonella dublin (strain CT_02021853).